Reading from the N-terminus, the 382-residue chain is Adenosine 3'-phospho 5'-phosphosulfate transporter 2 (382 aa).

The segment covering 1-10 (MSVSNRNGNG) has biased composition (polar residues). The interval 1–33 (MSVSNRNGNGSEVIYVGDRSTNRPPRNAPSPDE) is disordered. Helical transmembrane passes span 56 to 76 (LCCAGVFVLYLLYGYMQELIF), 83 to 103 (PYGWFLTLVQFAYYTVFGYVE), 121 to 141 (VLLAFLTLGTMGLSNSSLGYL), 144 to 164 (PTQVIFKCCKLVPVLIGSILI), 170 to 190 (GPLDFLAAIAMCLGLTLFTLA), 197 to 217 (NFNPFGVLLISLALLCDAAIG), 234 to 254 (VVIYSYGIGFVYLSVIMLLTG), 271 to 291 (FGYAFLFSLSGYLGIQIVLTL), 299 to 319 (LAATVTTARKAVTIALSFVFF), and 323 to 343 (FTINYLWSGLIVVLGIYLNVY).

The protein belongs to the nucleotide-sugar transporter family. SLC35B subfamily.

The protein localises to the golgi apparatus membrane. In terms of biological role, mediates the transport of adenosine 3'-phospho 5'-phosphosulfate (PAPS), from cytosol into Golgi. PAPS is a universal sulfuryl donor for sulfation events that take place in the Golgi. Essential for viability. Involved in glycosaminoglycan synthesis and the subsequent signaling. May be involved in hh and dpp signaling by controlling the sulfation of heparan sulfate (HS). In Aedes aegypti (Yellowfever mosquito), this protein is Adenosine 3'-phospho 5'-phosphosulfate transporter 2.